Reading from the N-terminus, the 63-residue chain is uncharacterized protein (63 aa).

Positions 1–15 (MGRNHIHKNRDKNKQ) are enriched in basic residues. The segment at 1–63 (MGRNHIHKNR…ADNRAKKKSR (63 aa)) is disordered. The segment covering 30–44 (GVYEEYSTELADADD) has biased composition (acidic residues). Basic and acidic residues predominate over residues 45 to 57 (REAQERAKAADNR).

This is an uncharacterized protein from Bacillus subtilis (strain 168).